The following is a 376-amino-acid chain: uncharacterized protein (376 aa).

The residue at position 59 (serine 59) is a Phosphoserine. The Rho-GAP domain maps to 139-367 (VAIEITVQRQ…CLIEHHNAIF (229 aa)). A disordered region spans residues 307–338 (RPSRSPKKSNDFETATPWDLLSDEGEGPDASS).

This is an uncharacterized protein from Arabidopsis thaliana (Mouse-ear cress).